Consider the following 274-residue polypeptide: Diaminopimelate epimerase (274 aa).

Substrate-binding residues include N11, Q44, and N64. Catalysis depends on C73, which acts as the Proton donor. Substrate is bound by residues 74-75 (GN), N157, N190, and 208-209 (ER). The active-site Proton acceptor is C217. A substrate-binding site is contributed by 218–219 (GS).

It belongs to the diaminopimelate epimerase family. In terms of assembly, homodimer.

Its subcellular location is the cytoplasm. The catalysed reaction is (2S,6S)-2,6-diaminopimelate = meso-2,6-diaminopimelate. The protein operates within amino-acid biosynthesis; L-lysine biosynthesis via DAP pathway; DL-2,6-diaminopimelate from LL-2,6-diaminopimelate: step 1/1. Catalyzes the stereoinversion of LL-2,6-diaminopimelate (L,L-DAP) to meso-diaminopimelate (meso-DAP), a precursor of L-lysine and an essential component of the bacterial peptidoglycan. This chain is Diaminopimelate epimerase, found in Cronobacter sakazakii (strain ATCC BAA-894) (Enterobacter sakazakii).